The sequence spans 376 residues: Mitogen-activated protein kinase 4 (376 aa).

The Protein kinase domain maps to Val-43–Leu-329. ATP contacts are provided by residues Ile-49–Val-57 and Lys-72. Asp-169 functions as the Proton acceptor in the catalytic mechanism. Thr-201 carries the phosphothreonine modification. Residues Thr-201 to Tyr-203 carry the TXY motif. Tyr-203 bears the Phosphotyrosine mark.

It belongs to the protein kinase superfamily. CMGC Ser/Thr protein kinase family. MAP kinase subfamily. In terms of assembly, interacts with MEKK1, MKK1, MKK2 and MKK6. May form a ternary complex composed of MEKK1 and MKK1/MKK2 and MPK4. Interacts with MKS1 and AP2C1. May form a ternary or larger complex with MKS1 and WRKY25 and/or WRKY33. Interacts with MAP65-1. No interactions with RACK1A, RACK1B or RACK1C. Interacts directly with ASR3 and mediates its phosphorylation. Binds to MEKK2. Interacts with PAT1. Binds to HT1. Post-translationally, dually phosphorylated on Thr-201 and Tyr-203, which activates the enzyme. Autophosphorylated on serine and tyrosine residues. Dephosphorylated by DSPTP1. Phosphorylated by MKK6 in vitro. As to expression, ubiquitous. Expressed in the veins and stomatal guard cells of leaf plates, petioles, stem, roots and flowers.

It is found in the cytoplasm. Its subcellular location is the nucleus. The protein localises to the cytoskeleton. It carries out the reaction L-seryl-[protein] + ATP = O-phospho-L-seryl-[protein] + ADP + H(+). It catalyses the reaction L-threonyl-[protein] + ATP = O-phospho-L-threonyl-[protein] + ADP + H(+). With respect to regulation, activated by threonine and tyrosine phosphorylation. Activated by the MAP kinase kinases MKK1 and MKK2. Activated in response to touch, wounding, low temperature, low humidity, salt stress and the bacterial elicitors flagellin and harpin. Activated upon Pseudomonas syringae pv. tomato DC3000 infection. Repressed by the protein phosphatase 2C AP2C1. Repressed by DSPTP1-mediated dephosphorylation. Activated by the MAP kinase kinase MKK6 in vitro. Its function is as follows. The ANPs-MKK6-MPK4 module is involved in the regulation of plant cytokinesis during meiosis and mitosis. Essential to promote the progression of cytokinesis and for cellularization (formation of the cell plate) during male-specific meiosis. Involved in cortical microtubules organization and stabilization by regulating the phosphorylation state of microtubule-associated proteins such as MAP65-1. Involved in root hair development process. Negative regulator of systemic acquired resistance (SAR) and salicylic acid- (SA) mediated defense response. Required for jasmonic acid- (JA) mediated defense gene expression. May regulate activity of transcription factor controlling pathogenesis-related (PR) gene expression. Seems to act independently of the SAR regulatory protein NPR1 (Nonexpresser of PR1). Phosphorylates MKS1 and transcription factors WRKY25 and WRKY33. The MEKK1, MKK1/MKK2 and MPK4 function in a signaling pathway that modulates the expression of genes responding to biotic and abiotic stresses and also plays an important role in pathogen defense by negatively regulating innate immunity. Phosphorylates MEKK2 upon treatment with flg22. Involved in stomatal movement regulation by repressing HT1 and HT1-mediated GHR1 phosphorylation. This is Mitogen-activated protein kinase 4 from Arabidopsis thaliana (Mouse-ear cress).